The sequence spans 384 residues: Acetylornithine aminotransferase (384 aa).

Pyridoxal 5'-phosphate is bound by residues 95–96 and Phe122; that span reads GA. Residue Arg125 participates in N(2)-acetyl-L-ornithine binding. Pyridoxal 5'-phosphate is bound at residue 207 to 210; it reads DEIQ. Position 236 is an N6-(pyridoxal phosphate)lysine (Lys236). Ser264 provides a ligand contact to N(2)-acetyl-L-ornithine. Pyridoxal 5'-phosphate is bound at residue Thr265.

It belongs to the class-III pyridoxal-phosphate-dependent aminotransferase family. ArgD subfamily. In terms of assembly, homodimer. It depends on pyridoxal 5'-phosphate as a cofactor.

The protein resides in the cytoplasm. It catalyses the reaction N(2)-acetyl-L-ornithine + 2-oxoglutarate = N-acetyl-L-glutamate 5-semialdehyde + L-glutamate. Its pathway is amino-acid biosynthesis; L-arginine biosynthesis; N(2)-acetyl-L-ornithine from L-glutamate: step 4/4. The polypeptide is Acetylornithine aminotransferase (Halalkalibacterium halodurans (strain ATCC BAA-125 / DSM 18197 / FERM 7344 / JCM 9153 / C-125) (Bacillus halodurans)).